Here is a 342-residue protein sequence, read N- to C-terminus: Anthranilate phosphoribosyltransferase (342 aa).

Residues glycine 90, glycine 93–serine 94, threonine 98, asparagine 100–threonine 103, lysine 118–serine 126, and serine 130 contribute to the 5-phospho-alpha-D-ribose 1-diphosphate site. Glycine 90 serves as a coordination point for anthranilate. Serine 102 contributes to the Mg(2+) binding site. An anthranilate-binding site is contributed by asparagine 121. Residue arginine 176 participates in anthranilate binding. Residues aspartate 235 and glutamate 236 each contribute to the Mg(2+) site.

This sequence belongs to the anthranilate phosphoribosyltransferase family. As to quaternary structure, homodimer. Mg(2+) is required as a cofactor.

It catalyses the reaction N-(5-phospho-beta-D-ribosyl)anthranilate + diphosphate = 5-phospho-alpha-D-ribose 1-diphosphate + anthranilate. It participates in amino-acid biosynthesis; L-tryptophan biosynthesis; L-tryptophan from chorismate: step 2/5. Its function is as follows. Catalyzes the transfer of the phosphoribosyl group of 5-phosphorylribose-1-pyrophosphate (PRPP) to anthranilate to yield N-(5'-phosphoribosyl)-anthranilate (PRA). This chain is Anthranilate phosphoribosyltransferase, found in Rhodopirellula baltica (strain DSM 10527 / NCIMB 13988 / SH1).